Reading from the N-terminus, the 231-residue chain is Membrane protein YknW (231 aa).

5 helical membrane passes run 38 to 58 (VWGPLLIVAAIIIVGAVLQSL), 93 to 113 (GAIIGGIAALFIAPLIYWLCV), 128 to 148 (LSLFVSLISSLGLLVNGIVAF), 171 to 191 (LASVLNTFEIFSIWSFVLLAI), and 205 to 225 (WISAIILFGILVVFSLFSGLI).

In terms of assembly, interacts with a complex composed of YknX, YknY and YknZ.

It is found in the cell membrane. In terms of biological role, part of an unusual four-component transporter, which is required for protection against the killing factor SdpC (sporulation-delaying protein). Has a role in the assembly of the YknXYZ complex. This chain is Membrane protein YknW (yknW), found in Bacillus subtilis (strain 168).